The chain runs to 196 residues: Putative NADH dehydrogenase/NAD(P)H nitroreductase XCV0587 (196 aa).

It belongs to the nitroreductase family. HadB/RutE subfamily. The cofactor is FMN.

This chain is Putative NADH dehydrogenase/NAD(P)H nitroreductase XCV0587, found in Xanthomonas euvesicatoria pv. vesicatoria (strain 85-10) (Xanthomonas campestris pv. vesicatoria).